The primary structure comprises 272 residues: Type III pantothenate kinase (272 aa).

6-13 (NVNNTNTL) is an ATP binding site. 113–116 (GADR) contacts substrate. Aspartate 115 functions as the Proton acceptor in the catalytic mechanism. Aspartate 135 contacts K(+). Position 138 (threonine 138) interacts with ATP. Threonine 190 is a substrate binding site.

This sequence belongs to the type III pantothenate kinase family. As to quaternary structure, homodimer. NH4(+) is required as a cofactor. The cofactor is K(+).

It is found in the cytoplasm. The catalysed reaction is (R)-pantothenate + ATP = (R)-4'-phosphopantothenate + ADP + H(+). The protein operates within cofactor biosynthesis; coenzyme A biosynthesis; CoA from (R)-pantothenate: step 1/5. Catalyzes the phosphorylation of pantothenate (Pan), the first step in CoA biosynthesis. This chain is Type III pantothenate kinase, found in Acidobacterium capsulatum (strain ATCC 51196 / DSM 11244 / BCRC 80197 / JCM 7670 / NBRC 15755 / NCIMB 13165 / 161).